The following is a 497-amino-acid chain: Probable cytosol aminopeptidase (497 aa).

Residues Lys263 and Asp268 each coordinate Mn(2+). Lys275 is a catalytic residue. Positions 286, 345, and 347 each coordinate Mn(2+). Arg349 is a catalytic residue.

Belongs to the peptidase M17 family. It depends on Mn(2+) as a cofactor.

It localises to the cytoplasm. The catalysed reaction is Release of an N-terminal amino acid, Xaa-|-Yaa-, in which Xaa is preferably Leu, but may be other amino acids including Pro although not Arg or Lys, and Yaa may be Pro. Amino acid amides and methyl esters are also readily hydrolyzed, but rates on arylamides are exceedingly low.. It carries out the reaction Release of an N-terminal amino acid, preferentially leucine, but not glutamic or aspartic acids.. In terms of biological role, presumably involved in the processing and regular turnover of intracellular proteins. Catalyzes the removal of unsubstituted N-terminal amino acids from various peptides. The chain is Probable cytosol aminopeptidase from Sinorhizobium fredii (strain NBRC 101917 / NGR234).